Reading from the N-terminus, the 462-residue chain is Notoamide biosynthesis cluster protein O' (462 aa).

3 helical membrane passes run 16-36 (IFNV…WAAM), 55-75 (AVIF…IAKI), and 79-99 (WAFA…YCNV). Asn-102 carries an N-linked (GlcNAc...) asparagine glycan. 4 consecutive transmembrane segments (helical) span residues 104 to 124 (SWYI…FWLT), 143 to 163 (AYWL…TLGV), 173 to 193 (ISVQ…FVAA), and 233 to 253 (ILLL…FSTY). Asn-254 carries an N-linked (GlcNAc...) asparagine glycan. The next 4 helical transmembrane spans lie at 265-285 (LSSL…GFFL), 297-317 (MAAF…AMVV), 343-363 (VYIL…WLIG), and 404-424 (AVAV…FVIY). Residues 443-462 (LQTSGEGSHDIMDANGKSDD) form a disordered region. Basic and acidic residues predominate over residues 449–462 (GSHDIMDANGKSDD).

The protein belongs to the unc-93 family.

The protein resides in the membrane. Part of the gene cluster that mediates the biosynthesis of notoamide, a fungal indole alkaloid that belongs to a family of natural products containing a characteristic bicyclo[2.2.2]diazaoctane core. The first step of notoamide biosynthesis involves coupling of L-proline and L-tryptophan by the bimodular NRPS notE', to produce cyclo-L-tryptophan-L-proline called brevianamide F. The reverse prenyltransferase notF' then acts as a deoxybrevianamide E synthase and converts brevianamide F to deoxybrevianamide E via reverse prenylation at C-2 of the indole ring leading to the bicyclo[2.2.2]diazaoctane core. Deoxybrevianamide E is further hydroxylated at C-6 of the indole ring, likely catalyzed by the cytochrome P450 monooxygenase notG', to yield 6-hydroxy-deoxybrevianamide E. 6-hydroxy-deoxybrevianamide E is a specific substrate of the prenyltransferase notC' for normal prenylation at C-7 to produce 6-hydroxy-7-prenyl-deoxybrevianamide, also called notoamide S. As the proposed pivotal branching point in notoamide biosynthesis, notoamide S can be diverted to notoamide E through an oxidative pyran ring closure putatively catalyzed by either notH' cytochrome P450 monooxygenase or the notD' FAD-linked oxidoreductase. This step would be followed by an indole 2,3-epoxidation-initiated pinacol-like rearrangement catalyzed by the notB' FAD-dependent monooxygenase leading to the formation of notoamide C and notoamide D. On the other hand notoamide S is converted to notoamide T by notH' (or notD'), a bifunctional oxidase that also functions as the intramolecular Diels-Alderase responsible for generation of (-)-notoamide T. To generate antipodal (+)-notoaminide T, notH (or notD) in Aspergillus strain MF297-2 is expected to catalyze a Diels-Alder reaction leading to the opposite stereochemistry. The remaining oxidoreductase notD' (or notH') likely catalyzes the oxidative pyran ring formation to yield (-)-stephacidin A. The FAD-dependent monooxygenase notI' is highly similar to notB' and is predicted to catalyze a similar conversion from (-)-stephacidin A to (+)-notoamide B via the 2,3-epoxidation of (-)-stephacidin A followed by a pinacol-type rearrangement. Finally, it remains unclear which enzyme could be responsible for the final hydroxylation steps leading to notoamide A and sclerotiamide. The function of notO' in the notoamide biosynthesis has not been determined yet. The polypeptide is Notoamide biosynthesis cluster protein O' (Aspergillus versicolor).